Here is a 263-residue protein sequence, read N- to C-terminus: Small ribosomal subunit protein eS4 (263 aa).

Residues 42–104 (LPLVIFLRNR…TNELFRLIYD (63 aa)) enclose the S4 RNA-binding domain.

It belongs to the eukaryotic ribosomal protein eS4 family.

This is Small ribosomal subunit protein eS4 (RpS4) from Bombyx mori (Silk moth).